Here is an 878-residue protein sequence, read N- to C-terminus: Valine--tRNA ligase (878 aa).

The short motif at Pro43 to His53 is the 'HIGH' region element. Positions Lys527–Ser531 match the 'KMSKS' region motif. Residue Lys530 coordinates ATP.

It belongs to the class-I aminoacyl-tRNA synthetase family. ValS type 2 subfamily.

It localises to the cytoplasm. The enzyme catalyses tRNA(Val) + L-valine + ATP = L-valyl-tRNA(Val) + AMP + diphosphate. Catalyzes the attachment of valine to tRNA(Val). As ValRS can inadvertently accommodate and process structurally similar amino acids such as threonine, to avoid such errors, it has a 'posttransfer' editing activity that hydrolyzes mischarged Thr-tRNA(Val) in a tRNA-dependent manner. The polypeptide is Valine--tRNA ligase (Methanocaldococcus jannaschii (strain ATCC 43067 / DSM 2661 / JAL-1 / JCM 10045 / NBRC 100440) (Methanococcus jannaschii)).